The primary structure comprises 475 residues: Tryptophan synthase beta chain 2, chloroplastic (475 aa).

The segment covering 1–21 (MATASTAATFRPSSVSASSEL) has biased composition (polar residues). Residues 1–44 (MATASTAATFRPSSVSASSELTHLRSPSKLPKFTPLPSARSRSS) form a disordered region. Residues 1-51 (MATASTAATFRPSSVSASSELTHLRSPSKLPKFTPLPSARSRSSSSFSVSC) constitute a chloroplast transit peptide. N-acetylthreonine is present on Thr-52. Lys-170 is subject to N6-(pyridoxal phosphate)lysine.

It belongs to the TrpB family. Tetramer of two alpha and two beta chains. It depends on pyridoxal 5'-phosphate as a cofactor.

It localises to the plastid. The protein localises to the chloroplast. The enzyme catalyses (1S,2R)-1-C-(indol-3-yl)glycerol 3-phosphate + L-serine = D-glyceraldehyde 3-phosphate + L-tryptophan + H2O. Its pathway is amino-acid biosynthesis; L-tryptophan biosynthesis; L-tryptophan from chorismate: step 5/5. In terms of biological role, the beta subunit is responsible for the synthesis of L-tryptophan from indole and L-serine. The polypeptide is Tryptophan synthase beta chain 2, chloroplastic (TSB2) (Arabidopsis thaliana (Mouse-ear cress)).